We begin with the raw amino-acid sequence, 247 residues long: 2,3-bisphosphoglycerate-dependent phosphoglycerate mutase (247 aa).

Substrate is bound by residues 8 to 15 (RHGESTWN), 21 to 22 (TG), Arg-60, 87 to 90 (ERHY), Lys-98, 114 to 115 (RR), and 183 to 184 (GN). The active-site Tele-phosphohistidine intermediate is the His-9. Residue Glu-87 is the Proton donor/acceptor of the active site.

The protein belongs to the phosphoglycerate mutase family. BPG-dependent PGAM subfamily. In terms of assembly, homodimer.

The enzyme catalyses (2R)-2-phosphoglycerate = (2R)-3-phosphoglycerate. Its pathway is carbohydrate degradation; glycolysis; pyruvate from D-glyceraldehyde 3-phosphate: step 3/5. Functionally, catalyzes the interconversion of 2-phosphoglycerate and 3-phosphoglycerate. This is 2,3-bisphosphoglycerate-dependent phosphoglycerate mutase from Delftia acidovorans (strain DSM 14801 / SPH-1).